A 591-amino-acid polypeptide reads, in one-letter code: Acyl-CoA-dependent acyltransferase MAC1 (591 aa).

Residues 589–591 (ARL) form a peroxisomal targeting signal type 1 region.

The protein belongs to the trichothecene O-acetyltransferase family.

The protein resides in the peroxisome. The protein operates within secondary metabolite biosynthesis. Its function is as follows. Acyl-CoA-dependent acyltransferase; part of the gene cluster that mediates the biosynthesis of mannosylerythritol lipids (MELs), surface-active substances that enhance the availability of water-insoluble substrates. Mannosylerythritol lipid production is responsible for hemolytic activity of Ustilago maydis. Depending on the number of acetyl groups, mannosylerythritol lipids can be differentiated into MEL A (fully acetylated), MEL B and MEL C (monoacetylated at R-6 and R-4, respectively), and the fully deacetylated MEL D. The first step in the pathway is the generation of mannosylerythritol by the glycosyltransferase EMT1 which catalyzes the transfer of GDP-mannose to the C-4 atom of meso-erythritol. This reaction has to be stereospecific, since only mannosyl-D-erythritol is generated. The produced disaccharide is subsequently acylated with fatty acids of various lengths derived from the peroxisomal beta-oxidation by the peroxisomal acyltransferases MAC1 and MAC2 at positions C-2 and C-3, repectively. The existence of MEL derivatives which carry an acetyl group at C-2 implies that at least MAC1 also accepts acetyl-CoA as a donor. The final step of MEL biosynthesis is the acetylation of the fully acylated mannosylerythritol lipids catalyzed by the acetyl-CoA-dependent acetyltransferase MAT1. MAT1 displays a relaxed regioselectivity and is able to transfer acetylgroups to both positions C-4 and C-6 of the mannosyl moiety. The chain is Acyl-CoA-dependent acyltransferase MAC1 from Mycosarcoma maydis (Corn smut fungus).